Consider the following 254-residue polypeptide: Nickel import ATP-binding protein NikD (254 aa).

Residues 2–241 (PQQIELRDIA…PKHAVTRSLV (240 aa)) form the ABC transporter domain. 36–43 (GGSGSGKS) contributes to the ATP binding site.

Belongs to the ABC transporter superfamily. Nickel importer (TC 3.A.1.5.3) family. The complex is composed of two ATP-binding proteins (NikD and NikE), two transmembrane proteins (NikB and NikC) and a solute-binding protein (NikA).

The protein resides in the cell inner membrane. It carries out the reaction Ni(2+)(out) + ATP + H2O = Ni(2+)(in) + ADP + phosphate + H(+). In terms of biological role, part of the ABC transporter complex NikABCDE involved in nickel import. Responsible for energy coupling to the transport system. The polypeptide is Nickel import ATP-binding protein NikD (Shigella dysenteriae serotype 1 (strain Sd197)).